We begin with the raw amino-acid sequence, 900 residues long: Sterol regulatory element-binding protein 1 (900 aa).

The segment covering 1 to 16 (MQSSIPSVSVSVASPA) has biased composition (low complexity). Disordered stretches follow at residues 1–49 (MQSS…TKAS) and 206–263 (TTCK…PKKT). Residues 1–440 (MQSSIPSVSV…FALPPFLMSP (440 aa)) form a nuclear form of sre1; complements deletions of sre1 or scp1 region. At 1–442 (MQSSIPSVSV…LPPFLMSPFT (442 aa)) the chain is on the cytoplasmic side. The segment covering 21 to 32 (TKASPDSKSPNS) has biased composition (polar residues). Positions 35 to 49 (AIPSSSPLASSTKAS) are enriched in low complexity. One can recognise a bHLH domain in the interval 260–332 (PKKTAHNMIE…AKATEYIRHL (73 aa)). A helical membrane pass occupies residues 443 to 463 (GTVLFNMLKIGVVLLGLFYLL). Residues 464 to 509 (HDNSLFKGFKGEKKSKVSTRSSMSPSSILFRKTVFEKYCLLDHSTS) are Lumenal-facing. A helical membrane pass occupies residues 510-530 (TISLFFGLLIFTLKSAYGYLT). Residues 531-900 (HRLSALYTSS…QEDLGYVSSA (370 aa)) lie on the Cytoplasmic side of the membrane. Phosphoserine occurs at positions 898 and 899.

Forms a tight complex with scp1, composed of 4 copies of scp1 and 4 copies of sre1, which protects sre1 precursor from degradation by the proteasome. In terms of processing, in low oxygen or sterol conditions, undergoes proteolytic cleavage by rhomboid-type protease rbd2 and is released as soluble transcription factor from the membrane. Post-translationally, processed form is phosphorylated.

The protein resides in the endoplasmic reticulum membrane. The protein localises to the nucleus. In terms of biological role, precursor of the transcription factor form (Processed sterol regulatory element-binding protein 1), which is embedded in the endoplasmic reticulum membrane. Low oxygen or sterol conditions promote processing of this form, releasing the transcription factor form that translocates into the nucleus and activates transcription of genes required for adaptation to anaerobic growth. Functionally, transcriptional activator required for transcription of genes required for adaptation to anaerobic growth like those implicated in the nonrespiratory oxygen-consumptive biosynthetic pathways of sterol, heme, sphingolipid, and ubiquinone biosynthesis. May monitor oxygen levels through sterol synthesis steps which require oxygen. This chain is Sterol regulatory element-binding protein 1, found in Schizosaccharomyces pombe (strain 972 / ATCC 24843) (Fission yeast).